The sequence spans 490 residues: Katanin p60 ATPase-containing subunit A-like 1 (490 aa).

The residue at position 1 (Met1) is an N-acetylmethionine. The segment at 95-184 is disordered; the sequence is DPAVWPPPVP…DGEMPKFDGA (90 aa). Residues 116-127 show a composition bias toward basic and acidic residues; the sequence is PNREVRPLRKEM. The segment covering 128–139 has biased composition (low complexity); that stretch reads AGVGARGPVGRA. Basic and acidic residues predominate over residues 143-169; the sequence is SKSEKPSTSRDKDYRARGRDDKGRKNM. Ser174 bears the Phosphoserine mark. Residue 248-255 coordinates ATP; the sequence is GPPGTGKT.

This sequence belongs to the AAA ATPase family. Katanin p60 subunit A1 subfamily. A-like 1 sub-subfamily. In terms of assembly, interacts with KATNB1 and KATNBL1. As to expression, expressed in testis, restricted to Sertoli cells (at protein level).

The protein resides in the cytoplasm. It localises to the cytoskeleton. It is found in the spindle pole. The protein localises to the spindle. It catalyses the reaction n ATP + n H2O + a microtubule = n ADP + n phosphate + (n+1) alpha/beta tubulin heterodimers.. In terms of biological role, regulates microtubule dynamics in Sertoli cells, a process that is essential for spermiogenesis and male fertility. Severs microtubules in an ATP-dependent manner, promoting rapid reorganization of cellular microtubule arrays. Has microtubule-severing activity in vitro. The sequence is that of Katanin p60 ATPase-containing subunit A-like 1 from Homo sapiens (Human).